The sequence spans 120 residues: Large ribosomal subunit protein eL18 (120 aa).

This sequence belongs to the eukaryotic ribosomal protein eL18 family.

The polypeptide is Large ribosomal subunit protein eL18 (Pyrococcus horikoshii (strain ATCC 700860 / DSM 12428 / JCM 9974 / NBRC 100139 / OT-3)).